A 299-amino-acid chain; its full sequence is Arginase (299 aa).

His99, Asp122, His124, and Asp126 together coordinate Mn(2+). Residues 124–128 (HGDVN), 135–137 (SGN), and Asp178 contribute to the substrate site. Residues Asp226 and Asp228 each contribute to the Mn(2+) site. Substrate is bound by residues Thr240 and Glu271.

It belongs to the arginase family. In terms of assembly, homohexamer. The cofactor is Mn(2+).

The enzyme catalyses L-arginine + H2O = urea + L-ornithine. It participates in nitrogen metabolism; urea cycle; L-ornithine and urea from L-arginine: step 1/1. Functionally, controls arginine catabolism. This is Arginase (rocF) from Bacillus caldovelox.